Consider the following 1312-residue polypeptide: DNA repair protein RAD50 (1312 aa).

Positions 13, 36, 37, 39, 40, 41, 42, 65, 67, and 158 each coordinate ATP. Residue T41 coordinates Mg(2+). Q158 contacts Mg(2+). 2 coiled-coil regions span residues 185–347 (TKAL…LIRR) and 403–558 (QDLT…LQND). S469 carries the phosphoserine modification. A Phosphothreonine modification is found at T568. Residues 640–678 (DCTIDEYNDVLEETELSYKTALENLKMHQTTLEFNRKAL) adopt a coiled-coil conformation. Residues 640-741 (DCTIDEYNDV…SLRLLEKHII (102 aa)) form the Zinc-hook domain. Residues C687 and C690 each coordinate Zn(2+). 2 coiled-coil regions span residues 712-741 (DANFEKTLKDTVQNEKEYLHSLRLLEKHII) and 787-1108 (LAES…DIEK).

It belongs to the SMC family. RAD50 subfamily. Component of the MRN complex composed of two heterodimers RAD50 and MRE11 associated with a single XRS2. The MRN complexes dimerize on DNA to form joined MRN-MRN oligomers required for DNA double-strand break repair. Zn(2+) serves as cofactor.

The protein localises to the nucleus. Its subcellular location is the chromosome. It catalyses the reaction ATP + H2O = ADP + phosphate + H(+). Functionally, component of the MRN complex, which plays a central role in double-strand break (DSB) repair, DNA recombination, maintenance of telomere integrity and meiosis. The MRN complex is involved in the repair of DNA double-strand breaks (DSBs) via homologous recombination (HR), an error-free mechanism which primarily occurs during S and G2 phases. The complex (1) mediates the end resection of damaged DNA, which generates proper single-stranded DNA, a key initial steps in HR, and is (2) required for the recruitment of other repair factors and efficient activation of TEL1/ATM and ATR upon DNA damage. The MRN complex possesses single-strand endonuclease activity and double-strand-specific 3'-5' exonuclease activity, which are provided by MRE11, to initiate end resection, which is required for single-strand invasion and recombination. Within the complex, RAD50 is both required to bind DNA ends and hold them in close proximity and regulate the activity of MRE11. RAD50 provides an ATP-dependent control of MRE11 by positioning DNA ends into the MRE11 active site: ATP-binding induces a large structural change from an open form with accessible MRE11 nuclease sites into a closed form. The MRN complex is also required for the processing of R-loops. This is DNA repair protein RAD50 from Saccharomyces cerevisiae (strain ATCC 204508 / S288c) (Baker's yeast).